A 476-amino-acid polypeptide reads, in one-letter code: MADKLDIKAFLDKDEQKDLLRLLTAGSVDDGKSTLIGRLLFDSKKLYEDQLDALERDSKRLGNAGEHIDYALLLDGLKAEREQGITIDVAYRYFSTNNRKFIIADTPGHEQYTRNMITGGSTANLAIILVDARMGVITQTRRHTFLVSLLGIKHVVLAVNKMDLVDFSEERFNEIVAEYKKFVAPLGIPDVTCIPLSALDGDNVVDKSERTPWYEGLSLLDFLETVHIDSDNNFSDFRFPVQYVLRPNLDFRGFCGKVASGIIRKGDKVMALPSGKVSHVKSIVTFDGELDYAFPPQSVTLTLEDEIDVSRGEMLVHPDNLPIVDRNFEAMLVWMDEEPMDINKSFFIKQTTNVSRTRIDSIKYKVDVNTMEHSSVPFLSLNEIARVVFTTAKELFFDPYRKNKSCGSFILIDPITNNTSAVGMIIDRVEKKDMNIADDFPVLNLPELGIAPEHYEAIEKAVKSLSEQGFEVRIEK.

The region spanning 17–232 (KDLLRLLTAG…LETVHIDSDN (216 aa)) is the tr-type G domain. A G1 region spans residues 26–33 (GSVDDGKS). 26–33 (GSVDDGKS) serves as a coordination point for GTP. The tract at residues 84–88 (GITID) is G2. Residues 105–108 (DTPG) form a G3 region. GTP contacts are provided by residues 105–109 (DTPGH) and 160–163 (NKMD). The tract at residues 160–163 (NKMD) is G4. Residues 197-199 (SAL) are G5.

This sequence belongs to the TRAFAC class translation factor GTPase superfamily. Classic translation factor GTPase family. CysN/NodQ subfamily. As to quaternary structure, heterodimer composed of CysD, the smaller subunit, and CysN.

The enzyme catalyses sulfate + ATP + H(+) = adenosine 5'-phosphosulfate + diphosphate. The protein operates within sulfur metabolism; hydrogen sulfide biosynthesis; sulfite from sulfate: step 1/3. Its function is as follows. With CysD forms the ATP sulfurylase (ATPS) that catalyzes the adenylation of sulfate producing adenosine 5'-phosphosulfate (APS) and diphosphate, the first enzymatic step in sulfur assimilation pathway. APS synthesis involves the formation of a high-energy phosphoric-sulfuric acid anhydride bond driven by GTP hydrolysis by CysN coupled to ATP hydrolysis by CysD. The sequence is that of Sulfate adenylyltransferase subunit 1 from Bacteroides fragilis (strain YCH46).